We begin with the raw amino-acid sequence, 320 residues long: Adhesin MafA 3 (320 aa).

The signal sequence occupies residues methionine 1–alanine 18. Cysteine 19 carries the N-palmitoyl cysteine lipid modification. A lipid anchor (S-diacylglycerol cysteine) is attached at cysteine 19. The span at histidine 288–threonine 298 shows a compositional bias: polar residues. The tract at residues histidine 288–proline 320 is disordered.

It belongs to the MafA family.

The protein localises to the cell outer membrane. The sequence is that of Adhesin MafA 3 (mafA3) from Neisseria meningitidis serogroup C / serotype 2a (strain ATCC 700532 / DSM 15464 / FAM18).